The following is a 240-amino-acid chain: 1-(5-phosphoribosyl)-5-[(5-phosphoribosylamino)methylideneamino] imidazole-4-carboxamide isomerase (240 aa).

Asp8 acts as the Proton acceptor in catalysis. Catalysis depends on Asp129, which acts as the Proton donor.

Belongs to the HisA/HisF family.

The protein resides in the cytoplasm. It catalyses the reaction 1-(5-phospho-beta-D-ribosyl)-5-[(5-phospho-beta-D-ribosylamino)methylideneamino]imidazole-4-carboxamide = 5-[(5-phospho-1-deoxy-D-ribulos-1-ylimino)methylamino]-1-(5-phospho-beta-D-ribosyl)imidazole-4-carboxamide. The protein operates within amino-acid biosynthesis; L-histidine biosynthesis; L-histidine from 5-phospho-alpha-D-ribose 1-diphosphate: step 4/9. The protein is 1-(5-phosphoribosyl)-5-[(5-phosphoribosylamino)methylideneamino] imidazole-4-carboxamide isomerase of Clostridium beijerinckii (strain ATCC 51743 / NCIMB 8052) (Clostridium acetobutylicum).